The primary structure comprises 421 residues: TITAN-like protein (421 aa).

The segment at 11–32 (EFCTVCRFHHDQGSRHKYFPRH) adopts a C2H2-type 1; degenerate zinc-finger fold. The C2H2-type 2; degenerate zinc-finger motif lies at 70–100 (VWCVFCDEDIVELGSSFACSKAINHFASSDH). The interval 279-306 (ISSSHSTDAGGNVHSGAPPPWLDANDGD) is disordered. 2 short sequence motifs (nuclear localization signal) span residues 328–335 (NRKLNPNR) and 377–384 (TRKESRKE). Residues 376–421 (GTRKESRKEFEKEKRKLVKTESISTESEPVKIQPYISKRARRESGE) are disordered. Residues 377-389 (TRKESRKEFEKEK) are compositionally biased toward basic and acidic residues.

Also present in cotyledons, hypocotyls, stems, veins of sepals and stigmas, and actively dividing tissues such as shoot apical meristem, root tips and emerging true leaves. Weak expression in petals and anthers, and not detected in mature leaves. In seeds, expressed in both the endosperm and embryo.

The protein resides in the nucleus. Functionally, key regulator for endosperm and embryo nuclear divisions. The chain is TITAN-like protein from Arabidopsis thaliana (Mouse-ear cress).